Reading from the N-terminus, the 352-residue chain is Biotin synthase (352 aa).

Residues 41–268 enclose the Radical SAM core domain; that stretch reads NEVQVSTLLS…ASHVRLSAGR (228 aa). Residues C56, C60, and C63 each coordinate [4Fe-4S] cluster. 4 residues coordinate [2Fe-2S] cluster: C100, C131, C191, and R263.

This sequence belongs to the radical SAM superfamily. Biotin synthase family. As to quaternary structure, homodimer. It depends on [4Fe-4S] cluster as a cofactor. [2Fe-2S] cluster serves as cofactor.

The enzyme catalyses (4R,5S)-dethiobiotin + (sulfur carrier)-SH + 2 reduced [2Fe-2S]-[ferredoxin] + 2 S-adenosyl-L-methionine = (sulfur carrier)-H + biotin + 2 5'-deoxyadenosine + 2 L-methionine + 2 oxidized [2Fe-2S]-[ferredoxin]. Its pathway is cofactor biosynthesis; biotin biosynthesis; biotin from 7,8-diaminononanoate: step 2/2. Catalyzes the conversion of dethiobiotin (DTB) to biotin by the insertion of a sulfur atom into dethiobiotin via a radical-based mechanism. This Marinobacter nauticus (strain ATCC 700491 / DSM 11845 / VT8) (Marinobacter aquaeolei) protein is Biotin synthase.